Here is a 484-residue protein sequence, read N- to C-terminus: Glutamate--tRNA ligase (484 aa).

The 'HIGH' region signature appears at 11-21 (PSPTGLLHIGN). Positions 255–259 (KLSKR) match the 'KMSKS' region motif. Lys-258 contributes to the ATP binding site.

The protein belongs to the class-I aminoacyl-tRNA synthetase family. Glutamate--tRNA ligase type 1 subfamily. Monomer.

The protein resides in the cytoplasm. The catalysed reaction is tRNA(Glu) + L-glutamate + ATP = L-glutamyl-tRNA(Glu) + AMP + diphosphate. Its function is as follows. Catalyzes the attachment of glutamate to tRNA(Glu) in a two-step reaction: glutamate is first activated by ATP to form Glu-AMP and then transferred to the acceptor end of tRNA(Glu). The chain is Glutamate--tRNA ligase from Streptococcus thermophilus (strain CNRZ 1066).